An 89-amino-acid chain; its full sequence is MSLSTEAKAKILADFGRCENDSGSTEVQVALLTAQINHLQGHFKTHIHDHHSRRGLLRMVSARRKLTAYLKRTDNARYTALIQKLGLRR.

This sequence belongs to the universal ribosomal protein uS15 family. As to quaternary structure, part of the 30S ribosomal subunit. Forms a bridge to the 50S subunit in the 70S ribosome, contacting the 23S rRNA.

Its function is as follows. One of the primary rRNA binding proteins, it binds directly to 16S rRNA where it helps nucleate assembly of the platform of the 30S subunit by binding and bridging several RNA helices of the 16S rRNA. In terms of biological role, forms an intersubunit bridge (bridge B4) with the 23S rRNA of the 50S subunit in the ribosome. The sequence is that of Small ribosomal subunit protein uS15 from Shewanella denitrificans (strain OS217 / ATCC BAA-1090 / DSM 15013).